Here is a 691-residue protein sequence, read N- to C-terminus: Calcium-binding and coiled-coil domain-containing protein 1 (691 aa).

The tract at residues 1–30 (MEESPLSRAPSRGGVNFLNVARTYIPNTKV) is p300 KIX-binding. The segment at 1-190 (MEESPLSRAP…VQELERALAT (190 aa)) is N-terminal AD (CTNNB1 binding site). The residue at position 4 (S4) is a Phosphoserine. The tract at residues 45-125 (SDWIGIFKVE…FQFREPRPMD (81 aa)) is interaction with GATA1. Coiled coils occupy residues 145 to 205 (KATV…YKGI), 232 to 339 (ELED…AELE), and 417 to 514 (QSVE…ADEK). A C-terminal AD (CTNNB1 binding site); interaction with CCAR1 region spans residues 501–691 (RKLEARLEKV…FSTQDPFTFE (191 aa)). The tract at residues 513–604 (EKWNEDATTE…SDSEAEDEKS (92 aa)) is disordered. The UBZ1-type zinc-finger motif lies at 653 to 679 (WKECPICKERFPAESDKDALEDHMDGH). Zn(2+)-binding residues include C656, C659, H675, and H679.

It belongs to the CALCOCO family. In terms of assembly, part of a calphoglin complex consisting of CALCOCO1, PPA1 and PGM. Interacts with the bHLH-PAS domains of GRIP1, AHR and ARNT. Interacts with CTNNB1 via both its N- and C-terminal regions. Interacts with EP300. Interacts with CCAR1 (via N-terminus) and GATA1.

The protein localises to the cytoplasm. It localises to the nucleus. Functionally, functions as a coactivator for aryl hydrocarbon and nuclear receptors (NR). Recruited to promoters through its contact with the N-terminal basic helix-loop-helix-Per-Arnt-Sim (PAS) domain of transcription factors or coactivators, such as NCOA2. During ER-activation acts synergistically in combination with other NCOA2-binding proteins, such as EP300, CREBBP and CARM1. Involved in the transcriptional activation of target genes in the Wnt/CTNNB1 pathway. Functions as a secondary coactivator in LEF1-mediated transcriptional activation via its interaction with CTNNB1. Coactivator function for nuclear receptors and LEF1/CTNNB1 involves differential utilization of two different activation regions. In association with CCAR1 enhances GATA1- and MED1-mediated transcriptional activation from the gamma-globin promoter during erythroid differentiation of K562 erythroleukemia cells. Seems to enhance inorganic pyrophosphatase thus activating phosphogluomutase (PMG). Probably functions as a component of the calphoglin complex, which is involved in linking cellular metabolism (phosphate and glucose metabolism) with other core functions including protein synthesis and degradation, calcium signaling and cell growth. The sequence is that of Calcium-binding and coiled-coil domain-containing protein 1 (CALCOCO1) from Pongo abelii (Sumatran orangutan).